Reading from the N-terminus, the 454-residue chain is Putative serine carboxypeptidase-like 23 (454 aa).

The N-terminal stretch at 1–22 (MARIHLIIILLVISSTSSSSSS) is a signal peptide. Residues Asn-52, Asn-102, and Asn-136 are each glycosylated (N-linked (GlcNAc...) asparagine). Intrachain disulfides connect Cys-85/Cys-338, Cys-247/Cys-258, and Cys-282/Cys-306. Residue Ser-178 is part of the active site. Residues Asn-287 and Asn-327 are each glycosylated (N-linked (GlcNAc...) asparagine). Active-site residues include Asp-375 and His-427.

The protein belongs to the peptidase S10 family. Expression not detected.

The protein resides in the secreted. In terms of biological role, probable carboxypeptidase. This chain is Putative serine carboxypeptidase-like 23 (SCPL23), found in Arabidopsis thaliana (Mouse-ear cress).